A 923-amino-acid chain; its full sequence is MLEDEYQLEFFKNNGFVRKQCQSCGKFFWTRDLDRKTCGDAPCDPYTFIGNPIFSREFDISQMREYYLSFFEEKGHTRINRYPVVARWRDDLYLTIASIADFQPFVTSGQVPPPANPLTISQPCIRLNDLDSVGRSGRHLTTFEMMAHHAFNKRDHEIYWKEHAMELCDELLTSLKLDPLAVSYKEEPWAGGGNAGPCVEVLVHGLELATLVFMDLKADKKGDVLIKGETYSKMDNYIVDTGYGLERFVWASKGSPTIYDALFPGIVNELMGLAGLEHELDNSEYANILAQNARLAGFMDVSEQSNLLELRKKVASSIGMTVDKLSAIMEPVEKVYAITDHTRCLTFMLGDGIIPSNVKAGYLARLVIRRTLRMMDDLDIRIPLSEIMDMHIKNMPEYPEFRENFPVIQDILVSEEEKFRNTMEKGRRIIQKSASHFKKTGEKIPLSQLTELYDSHGIPPEMAKEVASEIGVGVEFPDNFYSIIGELHNKAEEKEEEVVPFADRLKHLPKTKRSFYDEPTRLEFEAVVLDIFDNNIVLDNTFFYAEGGGQPADMGTIATAYAVYKVVDVQVYDGVIVHTIENPDGNLDIRKGDIVNGKVDEKRRMTLARHHTATHIVNDAARKVLGTHIWQAGAQKFEDHSRLDLSHYKHISPDELKQIELLANRMVMENKRVVTEWMSRTEAEQEYGFGLYQGGVPPGEKIRVVKVGDDVEACAGTHCVSTGVVGPIKILRTERIQDGVERVEFAAGVAAVRAMQKIDSLLSDSAKTLSVPPEQLPASVERFFGEWKDLKKENEKLKEEIARARVYRLLGGASEVAGLKVIAEFIPEADSLELQKTATELLKHEDVVTLLASDAEGVKLVASAGQKALSCGINAGSLVREMSKLVSGGGGGKPALAMGGGTDPSKIQDALARGLELVKEACK.

Residues His611, His615, Cys714, and His718 each contribute to the Zn(2+) site.

The protein belongs to the class-II aminoacyl-tRNA synthetase family. Requires Zn(2+) as cofactor.

It localises to the cytoplasm. It carries out the reaction tRNA(Ala) + L-alanine + ATP = L-alanyl-tRNA(Ala) + AMP + diphosphate. In terms of biological role, catalyzes the attachment of alanine to tRNA(Ala) in a two-step reaction: alanine is first activated by ATP to form Ala-AMP and then transferred to the acceptor end of tRNA(Ala). Also edits incorrectly charged Ser-tRNA(Ala) and Gly-tRNA(Ala) via its editing domain. The polypeptide is Alanine--tRNA ligase (Methanosarcina barkeri (strain Fusaro / DSM 804)).